The following is a 215-amino-acid chain: Small ribosomal subunit protein uS7 (215 aa).

It belongs to the universal ribosomal protein uS7 family. In terms of assembly, part of the 30S ribosomal subunit.

One of the primary rRNA binding proteins, it binds directly to 16S rRNA where it nucleates assembly of the head domain of the 30S subunit. Is located at the subunit interface close to the decoding center. The polypeptide is Small ribosomal subunit protein uS7 (Pyrococcus abyssi (strain GE5 / Orsay)).